The sequence spans 76 residues: Large ribosomal subunit protein bL28 (76 aa).

Residues 21 to 42 (RGKAKKEGGVGKHITKTSRRRQ) are disordered. The segment covering 33–42 (HITKTSRRRQ) has biased composition (basic residues).

Belongs to the bacterial ribosomal protein bL28 family.

This Halothermothrix orenii (strain H 168 / OCM 544 / DSM 9562) protein is Large ribosomal subunit protein bL28.